We begin with the raw amino-acid sequence, 148 residues long: FAD synthase (148 aa).

Residues 5-6 (TF), 10-13 (HPGH), Asp92, and Tyr119 each bind ATP.

The protein belongs to the archaeal FAD synthase family. As to quaternary structure, homodimer. It depends on a divalent metal cation as a cofactor.

The enzyme catalyses FMN + ATP + H(+) = FAD + diphosphate. It functions in the pathway cofactor biosynthesis; FAD biosynthesis; FAD from FMN: step 1/1. Catalyzes the transfer of the AMP portion of ATP to flavin mononucleotide (FMN) to produce flavin adenine dinucleotide (FAD) coenzyme. The protein is FAD synthase of Methanosphaera stadtmanae (strain ATCC 43021 / DSM 3091 / JCM 11832 / MCB-3).